We begin with the raw amino-acid sequence, 259 residues long: 4-hydroxy-tetrahydrodipicolinate reductase (259 aa).

NAD(+) is bound by residues G8–M13, G93–T95, and A119–F122. H149 serves as the catalytic Proton donor/acceptor. Residue H150 participates in (S)-2,3,4,5-tetrahydrodipicolinate binding. The active-site Proton donor is the K153. Residue G159–T160 coordinates (S)-2,3,4,5-tetrahydrodipicolinate.

The protein belongs to the DapB family.

It localises to the cytoplasm. It catalyses the reaction (S)-2,3,4,5-tetrahydrodipicolinate + NAD(+) + H2O = (2S,4S)-4-hydroxy-2,3,4,5-tetrahydrodipicolinate + NADH + H(+). It carries out the reaction (S)-2,3,4,5-tetrahydrodipicolinate + NADP(+) + H2O = (2S,4S)-4-hydroxy-2,3,4,5-tetrahydrodipicolinate + NADPH + H(+). Its pathway is amino-acid biosynthesis; L-lysine biosynthesis via DAP pathway; (S)-tetrahydrodipicolinate from L-aspartate: step 4/4. Its function is as follows. Catalyzes the conversion of 4-hydroxy-tetrahydrodipicolinate (HTPA) to tetrahydrodipicolinate. The chain is 4-hydroxy-tetrahydrodipicolinate reductase from Enterococcus faecalis (strain ATCC 700802 / V583).